The sequence spans 186 residues: Ribosome-recycling factor (186 aa).

This sequence belongs to the RRF family.

Its subcellular location is the cytoplasm. Its function is as follows. Responsible for the release of ribosomes from messenger RNA at the termination of protein biosynthesis. May increase the efficiency of translation by recycling ribosomes from one round of translation to another. The polypeptide is Ribosome-recycling factor (Cupriavidus metallidurans (strain ATCC 43123 / DSM 2839 / NBRC 102507 / CH34) (Ralstonia metallidurans)).